The primary structure comprises 306 residues: Pantothenate kinase (306 aa).

90-97 provides a ligand contact to ATP; it reads GSVAVGKS.

It belongs to the prokaryotic pantothenate kinase family.

It localises to the cytoplasm. It carries out the reaction (R)-pantothenate + ATP = (R)-4'-phosphopantothenate + ADP + H(+). It participates in cofactor biosynthesis; coenzyme A biosynthesis; CoA from (R)-pantothenate: step 1/5. This is Pantothenate kinase from Lactococcus lactis subsp. cremoris (strain SK11).